A 275-amino-acid chain; its full sequence is Phosphate import ATP-binding protein PstB 3 (275 aa).

Residues 1–26 form a disordered region; sequence MATQETDDSLISTDVQTDATERGDQP. Positions 9 to 18 are enriched in polar residues; sequence SLISTDVQTD. The ABC transporter domain maps to 31–270; the sequence is VETKHLDVHY…PEDDRVEDYI (240 aa). 63–70 contributes to the ATP binding site; that stretch reads GPSGCGKS.

The protein belongs to the ABC transporter superfamily. Phosphate importer (TC 3.A.1.7) family. The complex is composed of two ATP-binding proteins (PstB), two transmembrane proteins (PstC and PstA) and a solute-binding protein (PstS).

Its subcellular location is the cell membrane. The catalysed reaction is phosphate(out) + ATP + H2O = ADP + 2 phosphate(in) + H(+). Its function is as follows. Part of the ABC transporter complex PstSACB involved in phosphate import. Responsible for energy coupling to the transport system. In Natronomonas pharaonis (strain ATCC 35678 / DSM 2160 / CIP 103997 / JCM 8858 / NBRC 14720 / NCIMB 2260 / Gabara) (Halobacterium pharaonis), this protein is Phosphate import ATP-binding protein PstB 3.